The primary structure comprises 510 residues: Probable cytosol aminopeptidase (510 aa).

The Mn(2+) site is built by Lys282 and Asp287. The active site involves Lys294. Residues Asp305, Asp364, and Glu366 each contribute to the Mn(2+) site. Residue Arg368 is part of the active site.

The protein belongs to the peptidase M17 family. The cofactor is Mn(2+).

It is found in the cytoplasm. The enzyme catalyses Release of an N-terminal amino acid, Xaa-|-Yaa-, in which Xaa is preferably Leu, but may be other amino acids including Pro although not Arg or Lys, and Yaa may be Pro. Amino acid amides and methyl esters are also readily hydrolyzed, but rates on arylamides are exceedingly low.. The catalysed reaction is Release of an N-terminal amino acid, preferentially leucine, but not glutamic or aspartic acids.. Presumably involved in the processing and regular turnover of intracellular proteins. Catalyzes the removal of unsubstituted N-terminal amino acids from various peptides. This is Probable cytosol aminopeptidase from Cupriavidus pinatubonensis (strain JMP 134 / LMG 1197) (Cupriavidus necator (strain JMP 134)).